Consider the following 413-residue polypeptide: Ribosomal RNA large subunit methyltransferase G (413 aa).

Residues 389-413 form a disordered region; the sequence is EAEVEQAFDTETPHPQSALYGKPKA.

It belongs to the methyltransferase superfamily. RlmG family.

It is found in the cytoplasm. It carries out the reaction guanosine(1835) in 23S rRNA + S-adenosyl-L-methionine = N(2)-methylguanosine(1835) in 23S rRNA + S-adenosyl-L-homocysteine + H(+). In terms of biological role, specifically methylates the guanine in position 1835 (m2G1835) of 23S rRNA. This Shewanella pealeana (strain ATCC 700345 / ANG-SQ1) protein is Ribosomal RNA large subunit methyltransferase G.